The sequence spans 516 residues: MKKSLLSAVMLSSIALTAVGSPIAAAADDFDSQIQQQDKKIADLQNQQASAQSQIEALEGQVSAINTKAQDLLTKQDTLRKESAQLKQEIKDLQERIEKREATIQKQARETQVKNTSSNYIDAVLNADSLADAVGRIQAMSTIVKANQDLVQQQKEDKQAVEAKKAENEAKQKELADNQAALESQKGDLLAKQADLNVLKTSLAAEQATAEDKKADLNRKKAEAEAEQARIREQARLAEQARQQAAQEKAEKEAREQAAAQAAQTQALSSASTTTESSSAAQSSSEESKAPESSTTEESTSTESSTTTENSSTGSSSTESSSTEESTVPESSTQESTPANTESSSSSSNTNVNNNTNNSTNNSTNNSTTNNNNNNNTVTPAPTPTPTPAPAPAPNPSGSVNGAAIVAEAYKYIGTPYVWGGKDPSGFDCSGFTRYVYLQVTGRDIGGWTVPQESAGTKISVSQAKAGDLLFWGSAGGTYHVAISLGGGQYIHAPQPGENVKVGSVQWYTPDFAVSM.

Residues 1–27 form the signal peptide; that stretch reads MKKSLLSAVMLSSIALTAVGSPIAAAA. The disordered stretch occupies residues 208 to 397; it reads ATAEDKKADL…PAPAPAPNPS (190 aa). Positions 210-236 are enriched in basic and acidic residues; sequence AEDKKADLNRKKAEAEAEQARIREQAR. Composition is skewed to low complexity over residues 237 to 247 and 257 to 380; these read LAEQARQQAAQ and QAAA…TVTP. Pro residues predominate over residues 381–395; sequence APTPTPTPAPAPAPN. Residues 399–516 form the NlpC/P60 domain; the sequence is SVNGAAIVAE…WYTPDFAVSM (118 aa). Residue Cys-429 is the Nucleophile of the active site. His-480 functions as the Proton acceptor in the catalytic mechanism. The active site involves His-492.

Belongs to the peptidase C40 family.

It localises to the secreted. The protein localises to the cell wall. This chain is Protein P54, found in Enterococcus faecium (Streptococcus faecium).